Consider the following 538-residue polypeptide: Atos homolog protein B (538 aa).

Disordered regions lie at residues 1-103 (MRHV…GLVS), 130-149 (GSAT…PSSN), 163-185 (PDQG…QLHT), and 199-272 (KSPV…LGCP). A compositionally biased stretch (low complexity) spans 130–148 (GSATSSWTSGTQSTPWPSS). Positions 227 to 238 (HTPPGPGPPGPC) are enriched in pro residues. Ser254 and Ser255 each carry phosphoserine. Positions 348–430 (LLGNFEESLL…VPKVGTIQVT (83 aa)) are required for macropage invasion. The interval 436 to 444 (QTVVKMFLV) is transactivation domain 1 (TAD1).

It belongs to the ATOS family.

The protein resides in the nucleus. Functionally, transcription regulator that may syncronize transcriptional and translational programs. The polypeptide is Atos homolog protein B (Rattus norvegicus (Rat)).